The primary structure comprises 130 residues: MIVRTTQQITGTERDVSGDGWHSKRIVLADDGVGFSFHETTIDAGTVHVFHYQHHIEAVWLTAGTGTLTNLENGDVFTLGPGSMYLLDGNERHQLSADSEMRMMCVFNPPVTGREVHDESGAYPAAPALS.

It belongs to the ectoine synthase family.

It carries out the reaction (2S)-4-acetamido-2-aminobutanoate = L-ectoine + H2O. It participates in amine and polyamine biosynthesis; ectoine biosynthesis; L-ectoine from L-aspartate 4-semialdehyde: step 3/3. Its function is as follows. Catalyzes the circularization of gamma-N-acetyl-alpha,gamma-diaminobutyric acid (ADABA) to ectoine (1,4,5,6-tetrahydro-2-methyl-4-pyrimidine carboxylic acid), which is an excellent osmoprotectant. The chain is L-ectoine synthase from Mycobacteroides abscessus (strain ATCC 19977 / DSM 44196 / CCUG 20993 / CIP 104536 / JCM 13569 / NCTC 13031 / TMC 1543 / L948) (Mycobacterium abscessus).